The chain runs to 298 residues: MIIHPNFDPVAIHLGPLAVRWYGLMYLVGFIAAIVVGRIRLKLPYVAAQGWTAKDIDDMMFYGVLGTVLGGRLGYVLFYKADFYFSHPLDVFKVWEGGMSFHGGFLGVTLAMMLFAWQRKRHWLQVTDFVAPMVPTGLAAGRLGNFINGELWGRVTDPTAPWAMLFPGAMRDDAAWLPKHPALVEKWHLADVFMQYQMLPRHPSQLYEIALEGIALFFVLFLFARKPRPMGAISALFLIGYGLARFTVEFAREPDDFLGLLALGLSMGQWLSLPMIVAGVAMMVWAYRRRAANANAAA.

3 helical membrane passes run 17-37, 59-79, and 97-117; these read LAVRWYGLMYLVGFIAAIVVG, MMFYGVLGTVLGGRLGYVLFY, and GGMSFHGGFLGVTLAMMLFAW. Arg-142 contacts a 1,2-diacyl-sn-glycero-3-phospho-(1'-sn-glycerol). Transmembrane regions (helical) follow at residues 230–250 and 257–277; these read MGAISALFLIGYGLARFTVEF and FLGLLALGLSMGQWLSLPMIV.

It belongs to the Lgt family.

It is found in the cell inner membrane. It carries out the reaction L-cysteinyl-[prolipoprotein] + a 1,2-diacyl-sn-glycero-3-phospho-(1'-sn-glycerol) = an S-1,2-diacyl-sn-glyceryl-L-cysteinyl-[prolipoprotein] + sn-glycerol 1-phosphate + H(+). It participates in protein modification; lipoprotein biosynthesis (diacylglyceryl transfer). In terms of biological role, catalyzes the transfer of the diacylglyceryl group from phosphatidylglycerol to the sulfhydryl group of the N-terminal cysteine of a prolipoprotein, the first step in the formation of mature lipoproteins. The sequence is that of Phosphatidylglycerol--prolipoprotein diacylglyceryl transferase from Burkholderia cenocepacia (strain ATCC BAA-245 / DSM 16553 / LMG 16656 / NCTC 13227 / J2315 / CF5610) (Burkholderia cepacia (strain J2315)).